We begin with the raw amino-acid sequence, 257 residues long: MSLIDIQNLTIKNTSEKSLIKGIDLKIFSQQINALIGESGAGKSLIAKALLEYLPFDLSCTYDSYQFDGENVSRLSQYYGHTIGYISQNYAESFNDHTKLGKQLTAIYRKHYKGSKEEALSKVDKALSWVNLQSKDILNKYSFQLSGGQLERVYIASVLVLEPKLIIADEPVASLDALNGNQVMDLLQHIVLEHGQTLFIITHNLSHVLKYCQYIYVLKEGQIIERGNINHFKYEHLHPYTERLIKYRTQLKRDYYD.

The ABC transporter domain maps to 4 to 245; the sequence is IDIQNLTIKN…HLHPYTERLI (242 aa). Residue 37–44 participates in ATP binding; the sequence is GESGAGKS.

The protein belongs to the ABC transporter superfamily. As to quaternary structure, the complex is composed of two ATP-binding proteins (NikD and NikE), two transmembrane proteins (NikB and NikC) and a solute-binding protein (NikA).

The protein resides in the cell membrane. The enzyme catalyses Ni(2+)(out) + ATP + H2O = Ni(2+)(in) + ADP + phosphate + H(+). Part of the ABC transporter complex NikABCDE (Opp2) involved in nickel import. Probably responsible for energy coupling to the transport system. The protein is Nickel import system ATP-binding protein NikD of Staphylococcus aureus (strain MW2).